The sequence spans 196 residues: Pyridoxal 5'-phosphate synthase subunit PdxT (196 aa).

46-48 (GES) lines the L-glutamine pocket. Cysteine 78 serves as the catalytic Nucleophile. L-glutamine-binding positions include arginine 110 and 138–139 (IR). Active-site charge relay system residues include histidine 174 and glutamate 176.

Belongs to the glutaminase PdxT/SNO family. In terms of assembly, in the presence of PdxS, forms a dodecamer of heterodimers. Only shows activity in the heterodimer.

It catalyses the reaction aldehydo-D-ribose 5-phosphate + D-glyceraldehyde 3-phosphate + L-glutamine = pyridoxal 5'-phosphate + L-glutamate + phosphate + 3 H2O + H(+). The enzyme catalyses L-glutamine + H2O = L-glutamate + NH4(+). It functions in the pathway cofactor biosynthesis; pyridoxal 5'-phosphate biosynthesis. Catalyzes the hydrolysis of glutamine to glutamate and ammonia as part of the biosynthesis of pyridoxal 5'-phosphate. The resulting ammonia molecule is channeled to the active site of PdxS. The chain is Pyridoxal 5'-phosphate synthase subunit PdxT from Deinococcus radiodurans (strain ATCC 13939 / DSM 20539 / JCM 16871 / CCUG 27074 / LMG 4051 / NBRC 15346 / NCIMB 9279 / VKM B-1422 / R1).